The following is a 371-amino-acid chain: Histidinol-phosphate aminotransferase (371 aa).

K221 carries the post-translational modification N6-(pyridoxal phosphate)lysine.

Belongs to the class-II pyridoxal-phosphate-dependent aminotransferase family. Histidinol-phosphate aminotransferase subfamily. In terms of assembly, homodimer. Pyridoxal 5'-phosphate is required as a cofactor.

It catalyses the reaction L-histidinol phosphate + 2-oxoglutarate = 3-(imidazol-4-yl)-2-oxopropyl phosphate + L-glutamate. Its pathway is amino-acid biosynthesis; L-histidine biosynthesis; L-histidine from 5-phospho-alpha-D-ribose 1-diphosphate: step 7/9. The protein is Histidinol-phosphate aminotransferase of Pseudoalteromonas atlantica (strain T6c / ATCC BAA-1087).